Reading from the N-terminus, the 400-residue chain is Protein phosphatase methylesterase 1 (400 aa).

Positions 32–70 (DENDGDALGSLPSFNGQSNRNRKYTGKTGSTTDRISSKE) are disordered. The AB hydrolase-1 domain maps to 114–365 (PIFIFHHGAG…DSGHFIQEDS (252 aa)). Active-site residues include S205, D233, and H359.

Belongs to the AB hydrolase superfamily. As to quaternary structure, interacts with and inactivates the phosphatase PP2A-like catalytic subunits PPG1, PPH21, PPH22, PPH3 and SIT4.

The enzyme catalyses [phosphatase 2A protein]-C-terminal L-leucine methyl ester + H2O = [phosphatase 2A protein]-C-terminal L-leucine + methanol + H(+). Its function is as follows. Demethylates proteins that have been reversibly carboxymethylated. Demethylates the phosphatase PP2A catalytic subunits PPH21 and PPH22. Forms inactive complexes (PP2Ai) with phosphatase PP2A-like catalytic subunits. Involved in the regulation of cell cycle progression at START. This chain is Protein phosphatase methylesterase 1 (PPE1), found in Saccharomyces cerevisiae (strain ATCC 204508 / S288c) (Baker's yeast).